The sequence spans 247 residues: Cytochrome c oxidase subunit 2 (247 aa).

Topologically, residues 12–38 are mitochondrial intermembrane; that stretch reads DVPTPWGLYFQDSSTPNQEGIIELHDN. The chain crosses the membrane as a helical span at residues 39 to 59; that stretch reads IMFYLVLILCTVSWLLFSIVK. The Mitochondrial matrix portion of the chain corresponds to 60–78; that stretch reads DSSKNPLPHKYLVHGQTIE. Residues 79-101 form a helical membrane-spanning segment; that stretch reads IIWTILPAVVLLIIAFPSFILLY. Residues 102–247 are Mitochondrial intermembrane-facing; sequence LCDEVISPAM…KEFLTWLNEQ (146 aa). Residues His182, Cys217, Glu219, Cys221, His225, and Met228 each contribute to the Cu cation site. Glu219 contributes to the Mg(2+) binding site.

This sequence belongs to the cytochrome c oxidase subunit 2 family. As to quaternary structure, component of the cytochrome c oxidase (complex IV, CIV), a multisubunit enzyme composed of a catalytic core of 3 subunits and several supernumerary subunits. The complex exists as a monomer or a dimer and forms supercomplexes (SCs) in the inner mitochondrial membrane with ubiquinol-cytochrome c oxidoreductase (cytochrome b-c1 complex, complex III, CIII). Requires Cu cation as cofactor. The signal sequence of COX2 is processed by IMP1.

Its subcellular location is the mitochondrion inner membrane. The catalysed reaction is 4 Fe(II)-[cytochrome c] + O2 + 8 H(+)(in) = 4 Fe(III)-[cytochrome c] + 2 H2O + 4 H(+)(out). Component of the cytochrome c oxidase, the last enzyme in the mitochondrial electron transport chain which drives oxidative phosphorylation. The respiratory chain contains 3 multisubunit complexes succinate dehydrogenase (complex II, CII), ubiquinol-cytochrome c oxidoreductase (cytochrome b-c1 complex, complex III, CIII) and cytochrome c oxidase (complex IV, CIV), that cooperate to transfer electrons derived from NADH and succinate to molecular oxygen, creating an electrochemical gradient over the inner membrane that drives transmembrane transport and the ATP synthase. Cytochrome c oxidase is the component of the respiratory chain that catalyzes the reduction of oxygen to water. Electrons originating from reduced cytochrome c in the intermembrane space (IMS) are transferred via the dinuclear copper A center (CU(A)) of subunit 2 and heme A of subunit 1 to the active site in subunit 1, a binuclear center (BNC) formed by heme A3 and copper B (CU(B)). The BNC reduces molecular oxygen to 2 water molecules using 4 electrons from cytochrome c in the IMS and 4 protons from the mitochondrial matrix. This is Cytochrome c oxidase subunit 2 (COX2) from Cyberlindnera mrakii (Yeast).